A 513-amino-acid polypeptide reads, in one-letter code: Histidine ammonia-lyase (513 aa).

Positions 144–146 (ASG) form a cross-link, 5-imidazolinone (Ala-Gly). S145 carries the 2,3-didehydroalanine (Ser) modification.

Belongs to the PAL/histidase family. In terms of processing, contains an active site 4-methylidene-imidazol-5-one (MIO), which is formed autocatalytically by cyclization and dehydration of residues Ala-Ser-Gly.

The protein resides in the cytoplasm. It catalyses the reaction L-histidine = trans-urocanate + NH4(+). The protein operates within amino-acid degradation; L-histidine degradation into L-glutamate; N-formimidoyl-L-glutamate from L-histidine: step 1/3. This is Histidine ammonia-lyase from Streptococcus pyogenes serotype M49 (strain NZ131).